A 463-amino-acid chain; its full sequence is Metalloprotease slr0863 (463 aa).

Belongs to the peptidase U62 family.

Functionally, probable metalloprotease. This is Metalloprotease slr0863 from Synechocystis sp. (strain ATCC 27184 / PCC 6803 / Kazusa).